We begin with the raw amino-acid sequence, 268 residues long: Tryptophan synthase alpha chain (268 aa).

Active-site proton acceptor residues include glutamate 49 and aspartate 60.

Belongs to the TrpA family. As to quaternary structure, tetramer of two alpha and two beta chains.

It catalyses the reaction (1S,2R)-1-C-(indol-3-yl)glycerol 3-phosphate + L-serine = D-glyceraldehyde 3-phosphate + L-tryptophan + H2O. The protein operates within amino-acid biosynthesis; L-tryptophan biosynthesis; L-tryptophan from chorismate: step 5/5. Its function is as follows. The alpha subunit is responsible for the aldol cleavage of indoleglycerol phosphate to indole and glyceraldehyde 3-phosphate. The polypeptide is Tryptophan synthase alpha chain (Pseudomonas aeruginosa (strain UCBPP-PA14)).